The primary structure comprises 475 residues: BICD family-like cargo adapter 2 (475 aa).

A coiled-coil region spans residues 56–275 (ELGKALLERN…LKELQDELHM (220 aa)). 2 stretches are compositionally biased toward polar residues: residues 286-300 (HSSL…TAVQ) and 308-318 (SAETQSITSGY). The interval 286-318 (HSSLHSEIQQSTAVQNHEKGRNSAETQSITSGY) is disordered. Residues 340–413 (RLQDQVTMQH…ESLNLQLLST (74 aa)) are a coiled coil. Low complexity predominate over residues 440-450 (QSQKQQETQKP). The interval 440-459 (QSQKQQETQKPPESPQNSFL) is disordered.

Belongs to the BICDR family.

This Xenopus tropicalis (Western clawed frog) protein is BICD family-like cargo adapter 2 (bicdl2).